Reading from the N-terminus, the 348-residue chain is EGF-like domain containing protein 1 (348 aa).

The N-terminal stretch at 1–19 is a signal peptide; sequence MFYLSTFMTIVISLSLVSC. The region spanning 60–92 is the EGF-like domain; the sequence is TGSDCKVTCQNNGRCYDGNKCLCSSDYTGHLCE. 3 cysteine pairs are disulfide-bonded: Cys-64–Cys-74, Cys-68–Cys-80, and Cys-82–Cys-91. One can recognise a ZP domain in the interval 99–342; sequence RCTLDGVVFE…PTCAAPAVSQ (244 aa).

As to expression, prismatic layer of shell (at protein level). Expressed primarily in the mantle with highest level in the mantle edge and lower level in the mantle pallium.

The protein localises to the secreted. This is EGF-like domain containing protein 1 from Margaritifera margaritifera (Freshwater pearl mussel).